A 614-amino-acid chain; its full sequence is Acid phosphatase (614 aa).

Positions 1–22 are cleaved as a signal peptide; that stretch reads MKGTAASALLVALSATAAQARP. The region spanning 80–176 is the Fibronectin type-III domain; it reads IPKGMHIHYQ…EVLSFKTSRP (97 aa). N-linked (GlcNAc...) asparagine glycosylation is found at Asn-110, Asn-161, Asn-242, Asn-295, Asn-333, Asn-340, Asn-352, Asn-408, Asn-429, Asn-512, Asn-523, Asn-559, and Asn-578. Positions 606–614 are excised as a propeptide; that stretch reads VAGGKKLHS.

Monomer. Cu cation serves as cofactor. Post-translationally, glycosylated; probably with N-linked high-mannose oligosaccharides.

The protein resides in the secreted. The catalysed reaction is a phosphate monoester + H2O = an alcohol + phosphate. With respect to regulation, competitively inhibited by phosphomycin and inorganic orthophosphate. In Aspergillus ficuum, this protein is Acid phosphatase (aphA).